The sequence spans 328 residues: Serine protease 27 (328 aa).

The first 22 residues, 1–22, serve as a signal peptide directing secretion; that stretch reads MRQPHIAALLLLPLLLRSGTEG. Residues 23-37 constitute a propeptide, activation peptide; sequence ARTLRACGHPKMFNR. The Peptidase S1 domain maps to 38 to 280; that stretch reads MVGGENALEG…HHKWIHQIIP (243 aa). C63 and C79 are oxidised to a cystine. Catalysis depends on H78, which acts as the Charge relay system. Residue N82 is glycosylated (N-linked (GlcNAc...) asparagine). The Charge relay system role is filled by D127. 3 disulfide bridges follow: C161/C238, C194/C217, and C228/C256. The active-site Charge relay system is the S232.

This sequence belongs to the peptidase S1 family.

The protein localises to the secreted. The chain is Serine protease 27 (Prss27) from Mus musculus (Mouse).